Reading from the N-terminus, the 279-residue chain is Movement protein (279 aa).

Positions 246-279 are disordered; that stretch reads SESEDLNVESPPAAIGSSSASRSEAFRPQVVNGL. Over residues 254-268 the composition is skewed to low complexity; the sequence is ESPPAAIGSSSASRS.

The protein belongs to the cucumovirus movement protein family.

The protein resides in the host cell junction. The protein localises to the host plasmodesma. In terms of biological role, transports viral genome to neighboring plant cells directly through plasmosdesmata, without any budding. The movement protein allows efficient cell to cell propagation, by bypassing the host cell wall barrier. Acts by forming a tubular structure at the host plasmodesmata, enlarging it enough to allow free passage of virion capsids. This Cucurbita pepo (Vegetable marrow) protein is Movement protein.